Here is a 378-residue protein sequence, read N- to C-terminus: Protein RecA (378 aa).

65–72 (GPESSGKT) serves as a coordination point for ATP. The disordered stretch occupies residues 325-378 (AYGMDQTGEEDDQADDKSKDKATKPSDKSQAQAKPKKPVATETSLDLDDSKTDK). Positions 339–351 (DDKSKDKATKPSD) are enriched in basic and acidic residues.

Belongs to the RecA family.

The protein localises to the cytoplasm. Can catalyze the hydrolysis of ATP in the presence of single-stranded DNA, the ATP-dependent uptake of single-stranded DNA by duplex DNA, and the ATP-dependent hybridization of homologous single-stranded DNAs. It interacts with LexA causing its activation and leading to its autocatalytic cleavage. The sequence is that of Protein RecA from Lactiplantibacillus pentosus (Lactobacillus pentosus).